The following is a 248-amino-acid chain: 5'-nucleotidase SurE (248 aa).

A divalent metal cation-binding residues include D8, D9, S39, and N91.

The protein belongs to the SurE nucleotidase family. It depends on a divalent metal cation as a cofactor.

It localises to the cytoplasm. It catalyses the reaction a ribonucleoside 5'-phosphate + H2O = a ribonucleoside + phosphate. Its function is as follows. Nucleotidase that shows phosphatase activity on nucleoside 5'-monophosphates. The chain is 5'-nucleotidase SurE from Neisseria gonorrhoeae (strain ATCC 700825 / FA 1090).